Here is a 378-residue protein sequence, read N- to C-terminus: Chaperone protein DnaJ (378 aa).

The J domain occupies D5–G70. The segment at G138–T216 adopts a CR-type zinc-finger fold. Residues C151, C154, C168, C171, C190, C193, C204, and C207 each contribute to the Zn(2+) site. CXXCXGXG motif repeat units lie at residues C151–G158, C168–G175, C190–G197, and C204–G211.

The protein belongs to the DnaJ family. Homodimer. Requires Zn(2+) as cofactor.

It is found in the cytoplasm. In terms of biological role, participates actively in the response to hyperosmotic and heat shock by preventing the aggregation of stress-denatured proteins and by disaggregating proteins, also in an autonomous, DnaK-independent fashion. Unfolded proteins bind initially to DnaJ; upon interaction with the DnaJ-bound protein, DnaK hydrolyzes its bound ATP, resulting in the formation of a stable complex. GrpE releases ADP from DnaK; ATP binding to DnaK triggers the release of the substrate protein, thus completing the reaction cycle. Several rounds of ATP-dependent interactions between DnaJ, DnaK and GrpE are required for fully efficient folding. Also involved, together with DnaK and GrpE, in the DNA replication of plasmids through activation of initiation proteins. The sequence is that of Chaperone protein DnaJ from Burkholderia ambifaria (strain MC40-6).